A 1388-amino-acid chain; its full sequence is ABC transporter G family member 52 (1388 aa).

The tract at residues 1-24 is disordered; sequence MDDAGEICSFSRSSSSAREDDEED. In terms of domain architecture, ABC transporter 1 spans 135–406; that stretch reads TNALCITKKI…FKSVGFKCPE (272 aa). Position 168 to 175 (168 to 175) interacts with ATP; that stretch reads GPPGSGKT. Positions 484-697 constitute an ABC transmembrane type-2 1 domain; that stretch reads ELLKANIYRE…ALNALAVNEF (214 aa). 7 consecutive transmembrane segments (helical) span residues 503-523, 541-561, 590-610, 621-641, 646-666, 675-695, and 732-752; these read LYIF…TVFI, ALFY…GPAI, IPIS…VIGF, FLVL…IVAL, VIAS…CGFI, WWIW…LAVN, and ISIG…TICL. In terms of domain architecture, ABC transporter 2 spans 791 to 1043; it reads ITFEDIRYSV…ELIKYFEAIQ (253 aa). 836-843 contributes to the ATP binding site; that stretch reads GVSGAGKT. Residues 1116–1330 form the ABC transmembrane type-2 2 domain; the sequence is TQWLACLWKQ…TLNGLLTSQF (215 aa). The next 7 helical transmembrane spans lie at 1136–1156, 1167–1183, 1223–1243, 1250–1270, 1280–1300, 1305–1325, and 1357–1377; these read IVVR…MFWG, LFSI…AMGV, FPYI…MVGY, FLWY…YGMM, MSAV…GFLI, IPVW…LNGL, and LLWV…FLFG.

Belongs to the ABC transporter superfamily. ABCG family. PDR (TC 3.A.1.205) subfamily.

It is found in the membrane. Functionally, may be a general defense protein. This chain is ABC transporter G family member 52, found in Oryza sativa subsp. japonica (Rice).